Reading from the N-terminus, the 226-residue chain is DnaJ homolog subfamily C member 30, mitochondrial (226 aa).

Residues 1–38 (MAAMRWRWWQRLLPWRLLQARGFPQNSAPSLGLGARTY) constitute a mitochondrion transit peptide. Residues 49–114 (ALYDLLGVPS…TLRRKYDRGL (66 aa)) enclose the J domain. The segment at 116-157 (SDEDLRGPGVRPSRTPAPDPGSPRTPPPTSRTHDGSRASPGA) is disordered. The segment covering 130 to 144 (TPAPDPGSPRTPPPT) has biased composition (pro residues). Residues 208–225 (DTAAIFLIFSIFIIIGFY) form a helical membrane-spanning segment.

Associates with the ATP synthase complex. Interacts with MT-ATP6; interaction is direct. Interacts with ATP5MC2; interaction is direct. Expressed in brain, heart, kidney, liver, lung, spleen, stomach and testis. Highly expressed in the brain. In the neocortex, expressed in most, if not all, glutamatergic excitatory projection neurons (pyramidal) and many interneurons, with the strongest signal noticeably in large pyramidal neurons of layer 3C. Also present in pyramidal neurons of layer 3C PNs of the superior temporal cortex, as well as in pyramidal neurons (Betz cells) of the layer 5B primary motor cortex (at protein level).

It localises to the mitochondrion inner membrane. In terms of biological role, mitochondrial protein enriched in neurons that acts as a regulator of mitochondrial respiration. Associates with the ATP synthase complex and facilitates ATP synthesis. May be a chaperone protein involved in the turnover of the subunits of mitochondrial complex I N-module. It facilitates the degradation of N-module subunits damaged by oxidative stress, and contributes to complex I functional efficiency. The chain is DnaJ homolog subfamily C member 30, mitochondrial from Homo sapiens (Human).